Here is an 873-residue protein sequence, read N- to C-terminus: Polyribonucleotide nucleotidyltransferase (873 aa).

Residues aspartate 521 and aspartate 527 each contribute to the Mg(2+) site. Positions proline 587 to isoleucine 646 constitute a KH domain. In terms of domain architecture, S1 motif spans glycine 658–proline 730. Residues leucine 727–aspartate 873 are disordered. A compositionally biased stretch (basic and acidic residues) spans arginine 742–histidine 857.

It belongs to the polyribonucleotide nucleotidyltransferase family. Mg(2+) serves as cofactor.

It localises to the cytoplasm. It catalyses the reaction RNA(n+1) + phosphate = RNA(n) + a ribonucleoside 5'-diphosphate. Functionally, involved in mRNA degradation. Catalyzes the phosphorolysis of single-stranded polyribonucleotides processively in the 3'- to 5'-direction. The polypeptide is Polyribonucleotide nucleotidyltransferase (Bifidobacterium animalis subsp. lactis (strain AD011)).